The chain runs to 225 residues: Ribonuclease 3 (225 aa).

One can recognise an RNase III domain in the interval 7 to 129 (IPRLCRTLGY…IIGAIYLDSD (123 aa)). E42 serves as a coordination point for Mg(2+). D46 is a catalytic residue. Residues D115 and E118 each contribute to the Mg(2+) site. E118 is a catalytic residue. Positions 155–225 (DPKTLLQEYL…AAQVLELIKK (71 aa)) constitute a DRBM domain.

This sequence belongs to the ribonuclease III family. As to quaternary structure, homodimer. Requires Mg(2+) as cofactor.

Its subcellular location is the cytoplasm. It catalyses the reaction Endonucleolytic cleavage to 5'-phosphomonoester.. Its function is as follows. Digests double-stranded RNA. Involved in the processing of primary rRNA transcript to yield the immediate precursors to the large and small rRNAs (23S and 16S). Processes some mRNAs, and tRNAs when they are encoded in the rRNA operon. Processes pre-crRNA and tracrRNA of type II CRISPR loci if present in the organism. This is Ribonuclease 3 from Shewanella pealeana (strain ATCC 700345 / ANG-SQ1).